Reading from the N-terminus, the 207-residue chain is ATP synthase subunit b 2 (207 aa).

Residues 58 to 78 (LLWLVITFGVFYLLMQKVIAP) form a helical membrane-spanning segment.

This sequence belongs to the ATPase B chain family. F-type ATPases have 2 components, F(1) - the catalytic core - and F(0) - the membrane proton channel. F(1) has five subunits: alpha(3), beta(3), gamma(1), delta(1), epsilon(1). F(0) has three main subunits: a(1), b(2) and c(10-14). The alpha and beta chains form an alternating ring which encloses part of the gamma chain. F(1) is attached to F(0) by a central stalk formed by the gamma and epsilon chains, while a peripheral stalk is formed by the delta and b chains.

Its subcellular location is the cell inner membrane. F(1)F(0) ATP synthase produces ATP from ADP in the presence of a proton or sodium gradient. F-type ATPases consist of two structural domains, F(1) containing the extramembraneous catalytic core and F(0) containing the membrane proton channel, linked together by a central stalk and a peripheral stalk. During catalysis, ATP synthesis in the catalytic domain of F(1) is coupled via a rotary mechanism of the central stalk subunits to proton translocation. Its function is as follows. Component of the F(0) channel, it forms part of the peripheral stalk, linking F(1) to F(0). The b'-subunit is a diverged and duplicated form of b found in plants and photosynthetic bacteria. This chain is ATP synthase subunit b 2 (atpF2), found in Rhizobium johnstonii (strain DSM 114642 / LMG 32736 / 3841) (Rhizobium leguminosarum bv. viciae).